Reading from the N-terminus, the 76-residue chain is Small ribosomal subunit protein bS16 (76 aa).

This sequence belongs to the bacterial ribosomal protein bS16 family.

In Sulfurovum sp. (strain NBC37-1), this protein is Small ribosomal subunit protein bS16.